Consider the following 313-residue polypeptide: Proline iminopeptidase (313 aa).

An AB hydrolase-1 domain is found at 35-298; it reads KPVVILHGGP…TPGAGHSAFE (264 aa). The Nucleophile role is filled by Ser110. Asp266 is an active-site residue. His294 serves as the catalytic Proton donor.

The protein belongs to the peptidase S33 family.

The protein localises to the cytoplasm. The enzyme catalyses Release of N-terminal proline from a peptide.. In terms of biological role, specifically catalyzes the removal of N-terminal proline residues from peptides. In Xylella fastidiosa (strain 9a5c), this protein is Proline iminopeptidase (pip).